Here is a 310-residue protein sequence, read N- to C-terminus: Aspartate carbamoyltransferase catalytic subunit (310 aa).

Carbamoyl phosphate-binding residues include Arg58 and Thr59. L-aspartate is bound at residue Lys86. Carbamoyl phosphate contacts are provided by Arg108, His136, and Gln139. 2 residues coordinate L-aspartate: Arg169 and Arg222. Carbamoyl phosphate contacts are provided by Gly264 and Pro265.

It belongs to the aspartate/ornithine carbamoyltransferase superfamily. ATCase family. In terms of assembly, heterododecamer (2C3:3R2) of six catalytic PyrB chains organized as two trimers (C3), and six regulatory PyrI chains organized as three dimers (R2).

The enzyme catalyses carbamoyl phosphate + L-aspartate = N-carbamoyl-L-aspartate + phosphate + H(+). It participates in pyrimidine metabolism; UMP biosynthesis via de novo pathway; (S)-dihydroorotate from bicarbonate: step 2/3. Catalyzes the condensation of carbamoyl phosphate and aspartate to form carbamoyl aspartate and inorganic phosphate, the committed step in the de novo pyrimidine nucleotide biosynthesis pathway. The protein is Aspartate carbamoyltransferase catalytic subunit of Campylobacter fetus subsp. fetus (strain 82-40).